The primary structure comprises 304 residues: Chromo domain-containing protein cec-1 (304 aa).

A Chromo domain is found at 8–66 (YTVESILEHRKKKGKSEFYIKWLGYDHTHNSWEPKENIVDPTLIEAFFTREAARKAEIK). Residues 63–73 (AEIKAKKDKMA) are compositionally biased toward basic and acidic residues. Disordered regions lie at residues 63 to 235 (AEIK…EIQL) and 248 to 304 (VEPA…AIIE). Low complexity predominate over residues 75–102 (GKKGASSKASASVSKASASTPARGAKAA). Residues 106 to 116 (PPKKSPPKRQR) are compositionally biased toward basic residues. Residues 122–141 (IRPDSDTDEEHSSADKKSKA) are compositionally biased toward basic and acidic residues. Acidic residues-rich tracts occupy residues 142–152 (EDEEEVEDDEE), 163–204 (EEPE…DVQL), and 212–233 (EEEEEKVEEKKEEEEEEEEEEI). Over residues 248–292 (VEPAVATPEPSEPSSSEKAVVENGSSSAAAGNSASKPEVSAVEVV) the composition is skewed to low complexity. Over residues 293–304 (TVEDDDDIAIIE) the composition is skewed to acidic residues.

The protein resides in the nucleus. The protein localises to the chromosome. In Caenorhabditis elegans, this protein is Chromo domain-containing protein cec-1 (cec-1).